The primary structure comprises 56 residues: Ovomucoid (56 aa).

In terms of domain architecture, Kazal-like spans 6 to 56 (VDCSEYPKPACTLEYVPICGSDNKTYGNKCNFCNAVVESNGTLTLSHFGKC). Cystine bridges form between C8–C38, C16–C35, and C24–C56. N45 carries N-linked (GlcNAc...) asparagine glycosylation.

Its subcellular location is the secreted. The sequence is that of Ovomucoid from Cyrtonyx montezumae (Montezuma quail).